Here is a 188-residue protein sequence, read N- to C-terminus: Putative manganese efflux pump MntP (188 aa).

6 helical membrane-spanning segments follow: residues 3–23 (WLTI…VALA), 39–59 (LGFH…LLGM), 65–85 (ISAY…GRMV), 104–124 (GMTM…VGLS), 125–145 (IAML…VAGV), and 167–187 (ICGG…HTLL).

The protein belongs to the MntP (TC 9.B.29) family.

Its subcellular location is the cell inner membrane. Probably functions as a manganese efflux pump. This Citrifermentans bemidjiense (strain ATCC BAA-1014 / DSM 16622 / JCM 12645 / Bem) (Geobacter bemidjiensis) protein is Putative manganese efflux pump MntP.